The chain runs to 78 residues: Small ribosomal subunit protein eS17 (78 aa).

It belongs to the eukaryotic ribosomal protein eS17 family.

This chain is Small ribosomal subunit protein eS17, found in Sulfurisphaera tokodaii (strain DSM 16993 / JCM 10545 / NBRC 100140 / 7) (Sulfolobus tokodaii).